The sequence spans 191 residues: Elongation factor P 1 (191 aa).

The protein belongs to the elongation factor P family.

Its subcellular location is the cytoplasm. It functions in the pathway protein biosynthesis; polypeptide chain elongation. Involved in peptide bond synthesis. Stimulates efficient translation and peptide-bond synthesis on native or reconstituted 70S ribosomes in vitro. Probably functions indirectly by altering the affinity of the ribosome for aminoacyl-tRNA, thus increasing their reactivity as acceptors for peptidyl transferase. The protein is Elongation factor P 1 of Lactobacillus acidophilus (strain ATCC 700396 / NCK56 / N2 / NCFM).